The chain runs to 133 residues: uncharacterized protein (133 aa).

Transmembrane regions (helical) follow at residues 5–27, 42–64, 77–99, and 103–125; these read KLFF…FSLI, IAWN…YSLY, ALIS…TFSS, and LVWW…LLLK.

The protein localises to the cell membrane. This is an uncharacterized protein from Bacillus subtilis (strain 168).